The chain runs to 118 residues: uncharacterized protein (118 aa).

One can recognise an HTH hxlR-type domain in the interval 6–104 (CGFEVTKEVI…WGGYYAEQEY (99 aa)).

This is an uncharacterized protein from Bacillus subtilis (strain 168).